We begin with the raw amino-acid sequence, 275 residues long: T-cell ecto-ADP-ribosyltransferase 2 (275 aa).

A signal peptide spans 1 to 20 (MPSNICKFFLTWWLIQQVTG). 2 cysteine pairs are disulfide-bonded: C41–C243 and C141–C193. In terms of domain architecture, TR mART core spans 61–238 (AKLKVAWEEA…IFLDSPKRKK (178 aa)). Residues Y98, R146, and Q164 each coordinate NAD(+). The active site involves R146. S167 is a catalytic residue. S202 lines the NAD(+) pocket. At R204 the chain carries ADP-ribosylarginine; by autocatalysis. Residue E209 is part of the active site. Residue S246 is the site of GPI-anchor amidated serine attachment. Residues 247 to 275 (SAGARESCVSLFLVVLPSLLVQLLCLAEP) constitute a propeptide, removed in mature form.

It belongs to the Arg-specific ADP-ribosyltransferase family. In terms of tissue distribution, postthymic T-cells.

The protein resides in the cell membrane. The catalysed reaction is L-arginyl-[protein] + NAD(+) = N(omega)-(ADP-D-ribosyl)-L-arginyl-[protein] + nicotinamide + H(+). It carries out the reaction NAD(+) + H2O = ADP-D-ribose + nicotinamide + H(+). In terms of biological role, has both NAD(+) glycohydrolase and ADP-ribosyltransferase activity (to a lesser extent). This chain is T-cell ecto-ADP-ribosyltransferase 2 (Art2b), found in Rattus norvegicus (Rat).